Consider the following 225-residue polypeptide: MNFLLTNDDGIDAPGIEALYEALGKRGVWVAPKNQHSGCGHKVTTDQAIAVEQRGKNRYAVDGTPADCTRLGVVHFYPEVDWVIAGINAGGNMGIDSYLSGTVAAVREAAILGHKAIAISHWINKPRTINWAWASHWANAVFNTLWQQDLPPQHFWNVNLPHWQSGDPEPEVIFCEPSRDPLPVAFTIEGSNFFYRGEYSQRPRQPGSDIDVCFSGNIAITQLRV.

A divalent metal cation is bound by residues Asp8, Asp9, Ser37, and Asn88.

This sequence belongs to the SurE nucleotidase family. It depends on a divalent metal cation as a cofactor.

The protein localises to the cytoplasm. The enzyme catalyses a ribonucleoside 5'-phosphate + H2O = a ribonucleoside + phosphate. Its function is as follows. Nucleotidase that shows phosphatase activity on nucleoside 5'-monophosphates. In Synechocystis sp. (strain ATCC 27184 / PCC 6803 / Kazusa), this protein is Putative 5'-nucleotidase alr3139.